A 274-amino-acid polypeptide reads, in one-letter code: NH(3)-dependent NAD(+) synthetase (274 aa).

ATP is bound at residue Gly46–Ser53. Asp52 is a binding site for Mg(2+). Arg140 lines the deamido-NAD(+) pocket. Position 160 (Thr160) interacts with ATP. A Mg(2+)-binding site is contributed by Glu165. Deamido-NAD(+)-binding residues include Lys173 and Asp180. ATP-binding residues include Lys189 and Thr211. His260–Lys261 serves as a coordination point for deamido-NAD(+).

This sequence belongs to the NAD synthetase family. In terms of assembly, homodimer.

The enzyme catalyses deamido-NAD(+) + NH4(+) + ATP = AMP + diphosphate + NAD(+) + H(+). It participates in cofactor biosynthesis; NAD(+) biosynthesis; NAD(+) from deamido-NAD(+) (ammonia route): step 1/1. Functionally, catalyzes the ATP-dependent amidation of deamido-NAD to form NAD. Uses ammonia as a nitrogen source. The protein is NH(3)-dependent NAD(+) synthetase of Listeria welshimeri serovar 6b (strain ATCC 35897 / DSM 20650 / CCUG 15529 / CIP 8149 / NCTC 11857 / SLCC 5334 / V8).